A 160-amino-acid chain; its full sequence is 3-dehydroquinate dehydratase (160 aa).

Tyr22 acts as the Proton acceptor in catalysis. 3 residues coordinate substrate: Asn73, His79, and Asp86. Residue His99 is the Proton donor of the active site. Residues Ile100–Ser101 and Arg110 each bind substrate.

It belongs to the type-II 3-dehydroquinase family. In terms of assembly, homododecamer.

It catalyses the reaction 3-dehydroquinate = 3-dehydroshikimate + H2O. It functions in the pathway metabolic intermediate biosynthesis; chorismate biosynthesis; chorismate from D-erythrose 4-phosphate and phosphoenolpyruvate: step 3/7. Catalyzes a trans-dehydration via an enolate intermediate. This chain is 3-dehydroquinate dehydratase, found in Sulfurimonas denitrificans (strain ATCC 33889 / DSM 1251) (Thiomicrospira denitrificans (strain ATCC 33889 / DSM 1251)).